The chain runs to 462 residues: Hemopexin (462 aa).

The first 23 residues, 1–23 (MARVLGAPVALGLWSLCWSLAIA), serve as a signal peptide directing secretion. O-linked (GalNAc...) threonine glycosylation is found at Thr24 and Thr29. The disordered stretch occupies residues 29 to 48 (TSAHGNVAEGETKPDPDVTE). An O-glycosylated at one site region spans residues 30 to 40 (SAHGNVAEGET). Positions 38–48 (GETKPDPDVTE) are enriched in basic and acidic residues. Cystine bridges form between Cys50–Cys231, Cys149–Cys154, and Cys188–Cys200. Hemopexin repeat units follow at residues 53 to 93 (GWSF…WKNF), 94 to 139 (PSPV…FPGI), 140 to 184 (PSPL…SWPA), and 185 to 231 (VGNC…FMPC). Asn64 carries N-linked (GlcNAc...) (complex) asparagine glycosylation. His79 contacts heme. Position 150 (His150) interacts with heme. A glycan (N-linked (GlcNAc...) (complex) asparagine) is linked at Asn187. His236 serves as a coordination point for heme. Residues Asn240 and Asn246 are each glycosylated (N-linked (GlcNAc...) asparagine). Disulfide bonds link Cys257-Cys460, Cys366-Cys408, and Cys418-Cys435. Hemopexin repeat units follow at residues 259-304 (PHLV…WPQG), 305-352 (PSAV…VGTP), 357-396 (LDSVDAAFICPGSSRLHIMAGRRLWWLDLKSGAQATWTEL), and 400-450 (HEKV…ALPQ). Heme is bound at residue His293. Asn453 carries N-linked (GlcNAc...) (complex) asparagine glycosylation.

This sequence belongs to the hemopexin family. As to quaternary structure, interacts with FLVCR1. In terms of assembly, (Microbial infection) Interacts with hepatitis E virus/HEV protein ORF3. In terms of processing, N- and O-glycosylated. O-glycosylated with core 1 or possibly core 8 glycans. O-glycosylation in the 30-40 region is minor compared to glycosylation at Thr-24 and Thr-29. In terms of tissue distribution, expressed by the liver and secreted in plasma.

The protein resides in the secreted. Functionally, binds heme and transports it to the liver for breakdown and iron recovery, after which the free hemopexin returns to the circulation. This is Hemopexin (HPX) from Homo sapiens (Human).